A 141-amino-acid polypeptide reads, in one-letter code: Small ribosomal subunit protein bS6 (141 aa).

The interval 96-141 (VTGPSAMMKTVEREEFRKASQAGNQTTAPAASPADHAAAPASADRS) is disordered. Residues 123–141 (APAASPADHAAAPASADRS) show a composition bias toward low complexity.

It belongs to the bacterial ribosomal protein bS6 family.

Functionally, binds together with bS18 to 16S ribosomal RNA. The sequence is that of Small ribosomal subunit protein bS6 from Verminephrobacter eiseniae (strain EF01-2).